Consider the following 580-residue polypeptide: Cis-3-hydroxy-L-proline dehydratase (580 aa).

Ser-66 acts as the Proton acceptor in catalysis.

The protein belongs to the AcnX family. In terms of assembly, monomer. Requires Fe(3+) as cofactor.

The enzyme catalyses cis-3-hydroxy-L-proline = 1-pyrroline-2-carboxylate + H2O. Inhibited by Zn(2+), Cd(2+) and Hg(2+), but not by Co(2+), Ni(2+), Mn(2+), Sr(2+), Mg(2+), or Fe(3+). Inhibited by pyrrole-2-carboxylate and its derivative 2-thiophenecarboxylate, but not by trans-aconitate, fluorocitrate and oxalomalate, which are typical inhibitors of the aconitase enzymes. Its function is as follows. Catalyzes the dehydration of cis-3-hydroxy-L-proline (c3LHyp) to Delta(1)-pyrroline-2-carboxylate (Pyr2C). Also has activity with (2S,3S,4R)-3,4-dihydroxyproline as substrate, albeit at about 300-fold lower rate. No activity with L-proline, trans-4-hydroxy-L-proline (t4LHyp), cis-4-hydroxy-L-proline (c4LHyp), trans-3-hydroxy-L-proline (t3LHyp), D-proline, cis-4-hydroxy-D-proline (c4DHyp), trans-4-hydroxy-D-proline (t4DHyp) or L-serine as substrates. No hydro-lyase activity with citrate or cis-acotinate. Does not catalyze 2-epimerization of c3LHyp to trans-3-hydroxy-D-proline (t3DHyp). Involved in a degradation pathway that converts c3LHyp to L-proline, which would allow P.aeruginosa to grow on c3LHyp as a sole carbon source. This is Cis-3-hydroxy-L-proline dehydratase from Pseudomonas aeruginosa (strain ATCC 15692 / DSM 22644 / CIP 104116 / JCM 14847 / LMG 12228 / 1C / PRS 101 / PAO1).